Consider the following 487-residue polypeptide: L-tartrate/succinate antiporter (487 aa).

A run of 14 helical transmembrane segments spans residues 10–30 (YLAPLAVIAIIALIPVPAGLE), 33–53 (TWLYFAVFTGVIVGLILEPVP), 54–74 (GAVVAMVGISIIAILSPWLLF), 93–113 (WAVSGFSNSVIWLIFAAFMFG), 137–157 (TLFLGYAVMFSELILAPVTPS), 189–209 (IGSYIMWMGIVADCVTSAIFL), 236–256 (FLGMLPLSILLVLLVPWLAYV), 292–312 (LMVGALVLWIFGGDYIDAAMV), 313–333 (GYSVVALMLLLRIISWDDIVS), 340–360 (VFFWLASLITLATGLNNTGFI), 370–390 (SLSGYSPTIVMVALIVVFYLL), 393–413 (FFASATAYTSALAPMMIAAAL), 418–438 (IPLPVFCLMVGAAIGLGSILT), and 465–485 (IFGLIFLVLLVITGLLWMPVV).

Belongs to the SLC13A/DASS transporter (TC 2.A.47) family. DIT1 subfamily.

It is found in the cell inner membrane. It carries out the reaction (2R,3R)-tartrate(out) + succinate(in) = (2R,3R)-tartrate(in) + succinate(out). Its function is as follows. Catalyzes the uptake of tartrate in exchange for intracellular succinate. Essential for anaerobic L-tartrate fermentation. The polypeptide is L-tartrate/succinate antiporter (ttdT) (Escherichia coli O6:K15:H31 (strain 536 / UPEC)).